The chain runs to 254 residues: Mamu class II histocompatibility antigen, DR alpha chain (254 aa).

The first 25 residues, 1–25, serve as a signal peptide directing secretion; it reads MAESGVPVLGFFIIAVLMSAQESWA. The tract at residues 26–109 is alpha-1; it reads IKEEHVIIQA…KRSNNTPITN (84 aa). The Extracellular segment spans residues 26–216; sequence IKEEHVIIQA…APSPLPETTE (191 aa). N-linked (GlcNAc...) asparagine glycosylation is present at Asn-103. The segment at 110-203 is alpha-2; that stretch reads VPPEVTVLTN…CLDAPLLKHW (94 aa). One can recognise an Ig-like C1-type domain in the interval 112–204; the sequence is PEVTVLTNSP…LDAPLLKHWE (93 aa). Cysteines 132 and 188 form a disulfide. A connecting peptide region spans residues 204–216; the sequence is EFDAPSPLPETTE. The chain crosses the membrane as a helical span at residues 217–239; it reads NVVCALGLIVGLVGIIVGTVFII. Residues 240–254 lie on the Cytoplasmic side of the membrane; the sequence is KGVRKSNAAERRGPL. Lys-244 is covalently cross-linked (Glycyl lysine isopeptide (Lys-Gly) (interchain with G-Cter in ubiquitin)).

This sequence belongs to the MHC class II family. Heterodimer of an alpha chain and a beta chain.

The protein resides in the membrane. The protein is Mamu class II histocompatibility antigen, DR alpha chain (Mamu-DRA) of Macaca mulatta (Rhesus macaque).